Reading from the N-terminus, the 240-residue chain is DNA repair protein RecO (240 aa).

This sequence belongs to the RecO family.

In terms of biological role, involved in DNA repair and RecF pathway recombination. The polypeptide is DNA repair protein RecO (Actinobacillus pleuropneumoniae serotype 5b (strain L20)).